The primary structure comprises 220 residues: Fructose-6-phosphate aldolase (220 aa).

The active-site Schiff-base intermediate with substrate is Lys-85.

This sequence belongs to the transaldolase family. Type 3A subfamily. As to quaternary structure, homodecamer.

It localises to the cytoplasm. The enzyme catalyses beta-D-fructose 6-phosphate = dihydroxyacetone + D-glyceraldehyde 3-phosphate. Functionally, catalyzes the reversible formation of fructose 6-phosphate from dihydroxyacetone and D-glyceraldehyde 3-phosphate via an aldolization reaction. This chain is Fructose-6-phosphate aldolase, found in Salmonella agona (strain SL483).